Here is a 204-residue protein sequence, read N- to C-terminus: V-set and transmembrane domain-containing protein 2-like protein (204 aa).

The N-terminal stretch at 1–24 (MGAPLAVALGALHYLALFLQLGGA) is a signal peptide. The region spanning 41–158 (ALFTETPHDM…DGKARHHKVK (118 aa)) is the Ig-like domain. C62 and C142 are joined by a disulfide. Positions 168–204 (NSVLHLPEAPPAAPAPPPPKPGKELRKRSVDQEACSL) are disordered. Residues 175-187 (EAPPAAPAPPPPK) show a composition bias toward pro residues. Positions 188–198 (PGKELRKRSVD) are enriched in basic and acidic residues.

This Homo sapiens (Human) protein is V-set and transmembrane domain-containing protein 2-like protein (VSTM2L).